A 506-amino-acid polypeptide reads, in one-letter code: UDP-N-acetylmuramoyl-L-alanyl-D-glutamate--2,6-diaminopimelate ligase (506 aa).

Position 42 (serine 42) interacts with UDP-N-acetyl-alpha-D-muramoyl-L-alanyl-D-glutamate. 125 to 131 (GTSGKTT) contributes to the ATP binding site. Residues 166-167 (TT), serine 193, and arginine 201 each bind UDP-N-acetyl-alpha-D-muramoyl-L-alanyl-D-glutamate. The residue at position 233 (lysine 233) is an N6-carboxylysine. Residues arginine 395, 419–422 (DNPR), glycine 475, and glutamate 479 each bind meso-2,6-diaminopimelate. Residues 419–422 (DNPR) carry the Meso-diaminopimelate recognition motif motif.

Belongs to the MurCDEF family. MurE subfamily. The cofactor is Mg(2+). Post-translationally, carboxylation is probably crucial for Mg(2+) binding and, consequently, for the gamma-phosphate positioning of ATP.

It is found in the cytoplasm. The catalysed reaction is UDP-N-acetyl-alpha-D-muramoyl-L-alanyl-D-glutamate + meso-2,6-diaminopimelate + ATP = UDP-N-acetyl-alpha-D-muramoyl-L-alanyl-gamma-D-glutamyl-meso-2,6-diaminopimelate + ADP + phosphate + H(+). It functions in the pathway cell wall biogenesis; peptidoglycan biosynthesis. Its function is as follows. Catalyzes the addition of meso-diaminopimelic acid to the nucleotide precursor UDP-N-acetylmuramoyl-L-alanyl-D-glutamate (UMAG) in the biosynthesis of bacterial cell-wall peptidoglycan. This Streptomyces avermitilis (strain ATCC 31267 / DSM 46492 / JCM 5070 / NBRC 14893 / NCIMB 12804 / NRRL 8165 / MA-4680) protein is UDP-N-acetylmuramoyl-L-alanyl-D-glutamate--2,6-diaminopimelate ligase.